The chain runs to 200 residues: NAD(P)H dehydrogenase (quinone) (200 aa).

In terms of domain architecture, Flavodoxin-like spans 4 to 191; sequence LLVLYYSMYG…TIARFQGEHV (188 aa). Residues 10-15 and 79-81 contribute to the FMN site; these read SMYGHV and TRF. Residue Tyr12 participates in NAD(+) binding. Residue Trp99 participates in substrate binding. FMN-binding positions include 114 to 120 and His135; that span reads STASQHG.

It belongs to the WrbA family. FMN is required as a cofactor.

It catalyses the reaction a quinone + NADH + H(+) = a quinol + NAD(+). The catalysed reaction is a quinone + NADPH + H(+) = a quinol + NADP(+). In Nitrosococcus oceani (strain ATCC 19707 / BCRC 17464 / JCM 30415 / NCIMB 11848 / C-107), this protein is NAD(P)H dehydrogenase (quinone).